Consider the following 334-residue polypeptide: Putative binding protein YtlA (334 aa).

The first 23 residues, 1–23 (MNRWLRLGFACVGSIFLMFALAA), serve as a signal peptide directing secretion. C24 is lipidated: N-palmitoyl cysteine. The S-diacylglycerol cysteine moiety is linked to residue C24.

This sequence belongs to the bacterial solute-binding protein SsuA/TauA family.

Its subcellular location is the cell membrane. The sequence is that of Putative binding protein YtlA (ytlA) from Bacillus subtilis (strain 168).